A 602-amino-acid chain; its full sequence is Glutaminase liver isoform, mitochondrial (602 aa).

Residues Met1 to Ala14 constitute a mitochondrion transit peptide. Disordered stretches follow at residues Met1–Arg28 and Gln46–Gly67. Ser219 provides a ligand contact to substrate. Lys253 carries the N6-succinyllysine modification. Asn268 contacts substrate. N6-acetyllysine is present on residues Lys279 and Lys284. Positions 314 and 321 each coordinate substrate. At Lys329 the chain carries N6-acetyllysine. Substrate is bound by residues Tyr347, Tyr399, and Val417. ANK repeat units follow at residues Asp518–Arg551 and Trp552–Gln585.

It belongs to the glutaminase family. Homotetramer, dimer of dimers. Does not assemble into higher oligomers. Interacts with the PDZ domain of the syntrophin SNTA1. Interacts with the PDZ domain of TAX1BP3. Liver specific.

It is found in the mitochondrion. It carries out the reaction L-glutamine + H2O = L-glutamate + NH4(+). Functionally, plays an important role in the regulation of glutamine catabolism. Promotes mitochondrial respiration and increases ATP generation in cells by catalyzing the synthesis of glutamate and alpha-ketoglutarate. Increases cellular anti-oxidant function via NADH and glutathione production. May play a role in preventing tumor proliferation. This is Glutaminase liver isoform, mitochondrial (Gls2) from Rattus norvegicus (Rat).